Here is a 128-residue protein sequence, read N- to C-terminus: Small ribosomal subunit protein eS8 (128 aa).

This sequence belongs to the eukaryotic ribosomal protein eS8 family. As to quaternary structure, part of the 30S ribosomal subunit.

This is Small ribosomal subunit protein eS8 from Methanococcus maripaludis (strain C5 / ATCC BAA-1333).